A 747-amino-acid polypeptide reads, in one-letter code: Rho GTPase-activating protein 24 (747 aa).

2 disordered regions span residues 1-20 and 327-475; these read MEERCESTESPQGQGRKNTK and FPKD…GTHS. One can recognise a PH domain in the interval 17 to 123; the sequence is KNTKCGWLRK…WVKSIRRVIW (107 aa). Residues 133 to 327 form the Rho-GAP domain; it reads QKLEDTVRYE…VMISKHDRLF (195 aa). Composition is skewed to polar residues over residues 334–346 and 355–367; these read QSKPQDGPNSNNN and GQLQNKENNNTKE. A phosphoserine mark is found at serine 368, serine 390, serine 395, serine 397, serine 401, serine 412, serine 414, and serine 436. The span at 368–380 shows a compositional bias: basic and acidic residues; that stretch reads SPVRRCSWDKPES. Positions 381–404 are enriched in polar residues; sequence PQRSSVDNGSPTALSGSKTNSPRN. Residues 431–475 show a composition bias toward polar residues; the sequence is IVTNGSFSSSNAEGVEKPQTTPNGSLQARRTSSLKSSGTKMGTHS. Threonine 451 bears the Phosphothreonine mark. Position 494 is a phosphoserine (serine 494). The disordered stretch occupies residues 581-639; it reads DFYVGNFEDPVLDGPPQDDLSHPGDYENKSDRRSVGGRSSRATSSSDNSETFVGNTSSN. Positions 599 to 614 are enriched in basic and acidic residues; that stretch reads DLSHPGDYENKSDRRS. Low complexity predominate over residues 616 to 629; the sequence is GGRSSRATSSSDNS. Polar residues predominate over residues 630 to 639; it reads ETFVGNTSSN. A coiled-coil region spans residues 648–728; sequence SSLKQEMTKQ…KEMEQFFSTF (81 aa).

In terms of assembly, interacts with FLNA. In terms of processing, phosphorylated by ROCK, leading to activate the RacGAP activity.

The protein localises to the cytoplasm. It is found in the cytoskeleton. It localises to the cell junction. The protein resides in the adherens junction. Its subcellular location is the focal adhesion. The protein localises to the cell projection. Its function is as follows. Rho GTPase-activating protein involved in cell polarity, cell morphology and cytoskeletal organization. Acts as a GTPase activator for the Rac-type GTPase by converting it to an inactive GDP-bound state. Controls actin remodeling by inactivating Rac downstream of Rho leading to suppress leading edge protrusion and promotes cell retraction to achieve cellular polarity. Able to suppress RAC1 and CDC42 activity in vitro. Overexpression induces cell rounding with partial or complete disruption of actin stress fibers and formation of membrane ruffles, lamellipodia, and filopodia. Isoform 2 is a vascular cell-specific GAP involved in modulation of angiogenesis. The polypeptide is Rho GTPase-activating protein 24 (Arhgap24) (Mus musculus (Mouse)).